Here is a 342-residue protein sequence, read N- to C-terminus: ATP synthase subunit a (342 aa).

8 helical membrane-spanning segments follow: residues 11-31 (GLIK…AFAS), 109-129 (HVVT…IIGS), 170-190 (YLPY…LGLV), 199-219 (NINV…IAAL), 238-258 (ALWI…PVAL), 262-282 (LFAN…ISFI), 287-307 (IVAV…EIFV), and 308-328 (AFLQ…LASA).

The protein belongs to the ATPase A chain family. F-type ATPases have 2 components, CF(1) - the catalytic core - and CF(0) - the membrane proton channel. CF(1) has five subunits: alpha(3), beta(3), gamma(1), delta(1), epsilon(1). CF(0) has four main subunits: a, b, b' and c.

The protein localises to the cell inner membrane. Functionally, key component of the proton channel; it plays a direct role in the translocation of protons across the membrane. The sequence is that of ATP synthase subunit a from Chlorobium phaeobacteroides (strain DSM 266 / SMG 266 / 2430).